A 141-amino-acid polypeptide reads, in one-letter code: ATP synthase epsilon chain (141 aa).

It belongs to the ATPase epsilon chain family. In terms of assembly, F-type ATPases have 2 components, CF(1) - the catalytic core - and CF(0) - the membrane proton channel. CF(1) has five subunits: alpha(3), beta(3), gamma(1), delta(1), epsilon(1). CF(0) has three main subunits: a, b and c.

Its subcellular location is the cell inner membrane. In terms of biological role, produces ATP from ADP in the presence of a proton gradient across the membrane. The sequence is that of ATP synthase epsilon chain from Azoarcus sp. (strain BH72).